A 341-amino-acid chain; its full sequence is UDP-N-acetylglucosamine--N-acetylmuramyl-(pentapeptide) pyrophosphoryl-undecaprenol N-acetylglucosamine transferase (341 aa).

UDP-N-acetyl-alpha-D-glucosamine-binding positions include 10 to 12 (TGG), Asn124, Ser177, and Gln275.

Belongs to the glycosyltransferase 28 family. MurG subfamily.

Its subcellular location is the cell inner membrane. It carries out the reaction di-trans,octa-cis-undecaprenyl diphospho-N-acetyl-alpha-D-muramoyl-L-alanyl-D-glutamyl-meso-2,6-diaminopimeloyl-D-alanyl-D-alanine + UDP-N-acetyl-alpha-D-glucosamine = di-trans,octa-cis-undecaprenyl diphospho-[N-acetyl-alpha-D-glucosaminyl-(1-&gt;4)]-N-acetyl-alpha-D-muramoyl-L-alanyl-D-glutamyl-meso-2,6-diaminopimeloyl-D-alanyl-D-alanine + UDP + H(+). It functions in the pathway cell wall biogenesis; peptidoglycan biosynthesis. Cell wall formation. Catalyzes the transfer of a GlcNAc subunit on undecaprenyl-pyrophosphoryl-MurNAc-pentapeptide (lipid intermediate I) to form undecaprenyl-pyrophosphoryl-MurNAc-(pentapeptide)GlcNAc (lipid intermediate II). This is UDP-N-acetylglucosamine--N-acetylmuramyl-(pentapeptide) pyrophosphoryl-undecaprenol N-acetylglucosamine transferase from Campylobacter hominis (strain ATCC BAA-381 / DSM 21671 / CCUG 45161 / LMG 19568 / NCTC 13146 / CH001A).